A 271-amino-acid polypeptide reads, in one-letter code: Insulin-like growth factor-binding protein 5 (271 aa).

The first 19 residues, methionine 1–glycine 19, serve as a signal peptide directing secretion. An IGFBP N-terminal domain is found at serine 22–glutamate 102. 6 cysteine pairs are disulfide-bonded: cysteine 26–cysteine 52, cysteine 29–cysteine 54, cysteine 37–cysteine 55, cysteine 44–cysteine 58, cysteine 66–cysteine 79, and cysteine 73–cysteine 99. The span at threonine 109–proline 121 shows a compositional bias: basic and acidic residues. The interval threonine 109–glutamate 129 is disordered. A Phosphoserine modification is found at serine 115. Positions glutamine 188–cysteine 262 constitute a Thyroglobulin type-1 domain. Cystine bridges form between cysteine 191–cysteine 218, cysteine 229–cysteine 240, and cysteine 242–cysteine 262.

Interacts with IGF1; this interaction enhances the growth stimulatory effects of IGF1 on fibroblasts. Interacts with CAV1; this interaction allows trafficking of IGFBP5 from the plasma membrane to the nucleus. Interacts with NCL; this interaction is necessary for IGFBP5 localization to the nucleus. In terms of tissue distribution, most abundant in kidney, uterus and gastrocnemius muscle.

Its subcellular location is the secreted. It localises to the cytoplasm. The protein localises to the nucleus. In terms of biological role, multifunctional protein that plays a critical role in regulating the availability of IGFs to their receptors and thereby regulates IGF-mediated cellular processes including proliferation, differentiation, and apoptosis in a cell-type specific manner. Increases the cell proliferation of osteoblasts, intestinal smooth muscle cells and neuroblastoma cells. Enhances adhesion and survival of epithelial cells but decreases adhesion of mesenchymal cells. Once secreted, acts as a major mediator of mTORC1-dependent feedback inhibition of IGF1 signaling. Also plays a role in the induction of extracellular matrix (ECM) production and deposition independently of its nuclear translocation and binding to IGFs. Acts itself as a growth factor that can act independently of IGFs to regulate bone formation. Acts as a ligand for the ROR1 receptor which triggers formation of ROR1/HER2 heterodimer to enhance CREB oncogenic signaling. This is Insulin-like growth factor-binding protein 5 (Igfbp5) from Mus musculus (Mouse).